The primary structure comprises 102 residues: Small ribosomal subunit protein uS10 (102 aa).

Belongs to the universal ribosomal protein uS10 family. As to quaternary structure, part of the 30S ribosomal subunit.

In terms of biological role, involved in the binding of tRNA to the ribosomes. In Myxococcus xanthus (strain DK1622), this protein is Small ribosomal subunit protein uS10.